Reading from the N-terminus, the 464-residue chain is Alpha-1,6-mannosyl-glycoprotein 4-beta-N-acetylglucosaminyltransferase (464 aa).

Topologically, residues 1-10 (MRCSPKRSLT) are cytoplasmic. A helical; Signal-anchor for type II membrane protein transmembrane segment spans residues 11–31 (AVIAASFLLLLLLLLLHRGSW). Residues 32–464 (QDPQEVQFRD…QSIGIWTAGT (433 aa)) are Lumenal-facing. Residues Asn-70 and Asn-201 are each glycosylated (N-linked (GlcNAc...) asparagine).

Belongs to the glycosyltransferase 54 family. Requires a divalent metal cation as cofactor. As to expression, highly expressed in oviduct, spleen, lung and colon.

It is found in the golgi apparatus membrane. The catalysed reaction is N(4)-{beta-D-GlcNAc-(1-&gt;2)-[beta-D-GlcNAc-(1-&gt;4)]-alpha-D-Man-(1-&gt;3)-[beta-D-GlcNAc-(1-&gt;2)-[beta-D-GlcNAc-(1-&gt;6)]-alpha-D-Man-(1-&gt;6)]-beta-D-Man-(1-&gt;4)-beta-D-GlcNAc-(1-&gt;4)-beta-D-GlcNAc}-L-asparaginyl-[protein] + UDP-N-acetyl-alpha-D-glucosamine = N(4)-{beta-D-GlcNAc-(1-&gt;2)-[beta-D-GlcNAc-(1-&gt;4)]-alpha-D-Man-(1-&gt;3)-[beta-D-GlcNAc-(1-&gt;2)-[beta-D-GlcNAc-(1-&gt;4)]-[beta-D-GlcNAc-(1-&gt;6)]-alpha-D-Man-(1-&gt;6)]-beta-D-Man-(1-&gt;4)-beta-D-GlcNAc-(1-&gt;4)-beta-D-GlcNAc}-L-asparaginyl-[protein] + UDP + H(+). Its pathway is protein modification; protein glycosylation. Functionally, glycosyltransferase that catalyzes the transfer of GlcNAc to the Manalpha1-6 arm to form GlcNAcBeta1-4Manalpha1-6 linkage (also named 'GnT-VI' activity). May also participate in the transfer of N-acetylglucosamine (GlcNAc) to the core mannose residues of N-linked glycans by catalyzing the formation of the GlcNAcbeta1-4 branch on the GlcNAcbeta1-2Manalpha1-3 arm of the core structure of N-linked glycans. This chain is Alpha-1,6-mannosyl-glycoprotein 4-beta-N-acetylglucosaminyltransferase (MGAT4C), found in Gallus gallus (Chicken).